The following is a 931-amino-acid chain: Protein translocase subunit SecA (931 aa).

ATP-binding positions include Gln-87, 105–109, and Asp-515; that span reads GEGKT. Zn(2+)-binding residues include Cys-915, Cys-917, Cys-926, and His-927.

This sequence belongs to the SecA family. Monomer and homodimer. Part of the essential Sec protein translocation apparatus which comprises SecA, SecYEG and auxiliary proteins SecDF-YajC and YidC. Zn(2+) serves as cofactor.

The protein localises to the cell inner membrane. It is found in the cytoplasm. The enzyme catalyses ATP + H2O + cellular proteinSide 1 = ADP + phosphate + cellular proteinSide 2.. In terms of biological role, part of the Sec protein translocase complex. Interacts with the SecYEG preprotein conducting channel. Has a central role in coupling the hydrolysis of ATP to the transfer of proteins into and across the cell membrane, serving both as a receptor for the preprotein-SecB complex and as an ATP-driven molecular motor driving the stepwise translocation of polypeptide chains across the membrane. The chain is Protein translocase subunit SecA from Burkholderia ambifaria (strain MC40-6).